Consider the following 397-residue polypeptide: Citrate synthase (397 aa).

Residues histidine 266 and aspartate 320 contribute to the active site.

It belongs to the citrate synthase family.

It carries out the reaction oxaloacetate + acetyl-CoA + H2O = citrate + CoA + H(+). It participates in carbohydrate metabolism; tricarboxylic acid cycle; isocitrate from oxaloacetate: step 1/2. The polypeptide is Citrate synthase (gltA) (Synechocystis sp. (strain ATCC 27184 / PCC 6803 / Kazusa)).